The following is an 815-amino-acid chain: uncharacterized protein (815 aa).

The signal sequence occupies residues 1-21; that stretch reads MNIYRLSFVSCLVMAMPCAMA. A disulfide bridge links cysteine 795 with cysteine 814.

It belongs to the fimbrial export usher family.

The protein resides in the cell outer membrane. Could be involved in the export and assembly of the putative YbgD fimbrial subunit across the outer membrane. This is an uncharacterized protein from Escherichia coli (strain K12).